An 85-amino-acid polypeptide reads, in one-letter code: Protein Vpu (85 aa).

Topologically, residues methionine 1–leucine 7 are extracellular. The helical transmembrane segment at alanine 8–arginine 28 threads the bilayer. Residues lysine 29–proline 85 lie on the Cytoplasmic side of the membrane.

The protein belongs to the HIV-1 VPU protein family. In terms of assembly, homopentamer. Interacts with host CD4 and BRTC; these interactions induce proteasomal degradation of CD4. Interacts with host BST2; this interaction leads to the degradation of host BST2. Interacts with host FBXW11. Interacts with host AP1M1; this interaction plays a role in the mistrafficking and subsequent degradation of host BST2. Interacts with host RANBP2; this interaction allows Vpu to down-regulate host BLM sumoylation. Post-translationally, phosphorylated by host CK2. This phosphorylation is necessary for interaction with human BTRC and degradation of CD4.

Its subcellular location is the host membrane. With respect to regulation, ion channel activity is inhibited by hexamethylene amiloride in vitro. Functionally, enhances virion budding by targeting host CD4 and Tetherin/BST2 to proteasome degradation. Degradation of CD4 prevents any unwanted premature interactions between viral Env and its host receptor CD4 in the endoplasmic reticulum. Degradation of antiretroviral protein Tetherin/BST2 is important for virion budding, as BST2 tethers new viral particles to the host cell membrane. Mechanistically, Vpu bridges either CD4 or BST2 to BTRC, a substrate recognition subunit of the Skp1/Cullin/F-box protein E3 ubiquitin ligase, induces their ubiquitination and subsequent proteasomal degradation. The alteration of the E3 ligase specificity by Vpu seems to promote the degradation of host IKBKB, leading to NF-kappa-B down-regulation and subsequent apoptosis. Acts as a viroporin that forms an oligomeric ion channel in membranes. Modulates the host DNA repair mechanisms to promote degradation of nuclear viral cDNA in cells that are already productively infected in order to suppress immune sensing and proviral hyper-integration (superinfection). Manipulates PML-NBs and modulates SUMOylation of host BLM protein thereby enhancing its DNA-end processing activity toward viral unintegrated linear DNA. Also inhibits RAD52-mediated homologous repair of viral cDNA, preventing the generation of dead-end circular forms of single copies of the long terminal repeat and permitting sustained nucleolytic attack. This chain is Protein Vpu, found in Human immunodeficiency virus type 1 group O (isolate ANT70) (HIV-1).